We begin with the raw amino-acid sequence, 346 residues long: KH domain-containing, RNA-binding, signal transduction-associated protein 3 (346 aa).

The segment at 1 to 160 (MEEKYLPELM…IKKFLIPDYN (160 aa)) is involved in homodimerization. Residue lysine 4 forms a Glycyl lysine isopeptide (Lys-Gly) (interchain with G-Cter in SUMO2) linkage. In terms of domain architecture, KH spans 61 to 127 (LIPVKQFPKF…AKYFHLNDDL (67 aa)). Positions 212–251 (RPVGVVVPRGTPTPRGVLSTRGPVSRGRGLLTPRARGVPP) are interaction with SIAH1. A compositionally biased stretch (low complexity) spans 213 to 228 (PVGVVVPRGTPTPRGV). 2 disordered regions span residues 213–267 (PVGV…ETYG) and 318–346 (QEEW…YGRY). The span at 253-262 (GYRPPPPPPT) shows a compositional bias: pro residues.

It belongs to the KHDRBS family. Self-associates to form homooligomers; dimerization increases RNA affinity. Interacts with KHDRBS2/SLM-1. Interacts with KHDRBS1/SAM68; heterooligomer formation of KHDRBS family proteins may modulate RNA substrate specificity. Interacts with the splicing regulatory proteins SFRS9, SAFB and YTHDC1. Interacts with HNRPL. Interacts with RBMX, RBMY1A1, p85 subunit of PI3-kinase, SERPINB5. Interacts with SIAH1 which promotes targeting for degradation. Phosphorylated on tyrosine residues. Isoform 1 C-terminal region is tyrosine-rich, but isoform 2 lacking this C-terminal region is also tyrosine-phosphorylated. As to expression, ubiquitous with higher expression in testis, skeletal muscle and brain. Expressed in the kidney only in podocytes, the glomerular epithelial cells of the kidney. Strongly expressed after meiosis.

The protein localises to the nucleus. RNA-binding protein that plays a role in the regulation of alternative splicing and influences mRNA splice site selection and exon inclusion. Binds preferentially to the 5'-[AU]UAAA-3' motif in vitro. Binds optimally to RNA containing 5'-[AU]UAA-3' as a bipartite motif spaced by more than 15 nucleotides. Binds poly(A). RNA-binding abilities are down-regulated by tyrosine kinase PTK6. Involved in splice site selection of vascular endothelial growth factor. In vitro regulates CD44 alternative splicing by direct binding to purine-rich exonic enhancer. Can regulate alternative splicing of neurexins NRXN1-3 in the laminin G-like domain 6 containing the evolutionary conserved neurexin alternative spliced segment 4 (AS4) involved in neurexin selective targeting to postsynaptic partners such as neuroligins and LRRTM family members. Targeted, cell-type specific splicing regulation of NRXN1 at AS4 is involved in neuronal glutamatergic synapse function and plasticity. May regulate expression of KHDRBS2/SLIM-1 in defined brain neuron populations by modifying its alternative splicing. Can bind FABP9 mRNA. May play a role as a negative regulator of cell growth. Inhibits cell proliferation. Functionally, (Microbial infection) Involved in post-transcriptional regulation of HIV-1 gene expression. The polypeptide is KH domain-containing, RNA-binding, signal transduction-associated protein 3 (KHDRBS3) (Homo sapiens (Human)).